Reading from the N-terminus, the 493-residue chain is MAVHRSLLNKPTWCRVAFWWWMLVMVMRIQGTNGKEQDSVIKLPTQEVDAESDEVGTRWAVLVAGSNGYGNYRHQADVCHAYQLLIKGGVKEENIVVFMYDDIATHELNPRPGVIINNPQGPDVYAGVPKDYTGESVTSHNFFAVLLGDKSKVKGGSGKVINSKPEDRIFVYYSDHGGPGVLGMPNMPYLYAMDFIDVLKKKHASGGYKEMVIYVEACESGSIFEGIMPKDLNIYVTTASNAQENSWGTYCPGMYPPPPPEYITCLGDLYSVAWMEDSESHNLKKESVEQQYQSVKQRTSNFEAYAMGSHVMQYGDANMTAEKLYLYHGFDPATVNFPPHNGRLKSKMEVVNQRDAELLFMWQVYQRSNHLPEKKTDILKQIEEIVKHRKHLDGSVELIGVLLYGPEKASSVLRSVRTTGLPLVDDWTCLKSMVRVYETHCGSLTQYGMKHMRAFANICNSGVSETSMEKACVAACGGYHAGLLHPSNTGYSA.

A signal peptide spans 1–34 (MAVHRSLLNKPTWCRVAFWWWMLVMVMRIQGTNG). Residues 35–53 (KEQDSVIKLPTQEVDAESD) constitute a propeptide that is removed on maturation. The active site involves H176. C218 functions as the Nucleophile in the catalytic mechanism. Cysteines 251 and 265 form a disulfide. N318 carries N-linked (GlcNAc...) asparagine glycosylation. 2 disulfide bridges follow: C429–C459 and C441–C476.

The protein belongs to the peptidase C13 family.

Functionally, asparagine-specific endopeptidase involved in the processing of vacuolar seed protein precursors into the mature forms. The sequence is that of Vacuolar-processing enzyme from Phaseolus vulgaris (Kidney bean).